A 153-amino-acid chain; its full sequence is Small ribosomal subunit protein uS11 (153 aa).

Belongs to the universal ribosomal protein uS11 family.

The sequence is that of Small ribosomal subunit protein uS11 (RPS14) from Chlamydomonas reinhardtii (Chlamydomonas smithii).